Reading from the N-terminus, the 1517-residue chain is Neurite extension and migration factor (1517 aa).

Residues 381-405 show a composition bias toward basic and acidic residues; it reads DKKKGKEEVHEDKSIEKKDEKDNGE. Disordered stretches follow at residues 381–416, 505–529, 644–697, 732–775, 1065–1084, 1161–1228, and 1372–1422; these read DKKKGKEEVHEDKSIEKKDEKDNGEKPALNNKPCSG, VNERKEWPPGGSKEEDDDEWCPKKR, SMEA…GLIG, KKIK…HMSE, RHSSLSEMSPPDTPSLSPQS, DEPA…KKGK, and AGTP…SSED. Over residues 644–663 the composition is skewed to polar residues; it reads SMEASASSKQVSFGSDQKQA. Residues 678–687 are compositionally biased toward low complexity; it reads SALLAAPSSA. The segment covering 764–773 has biased composition (polar residues); the sequence is TPGTSNSSHM.

It localises to the nucleus. The protein resides in the cytoplasm. Involved in neurite outgrowth by regulating cell-cell adhesion via the N-cadherin signaling pathway. May act by regulating expression of protein-coding genes, such as N-cadherins and integrin beta-1 (ITGB1). The protein is Neurite extension and migration factor of Rattus norvegicus (Rat).